Consider the following 318-residue polypeptide: Olfactory receptor 2A2 (318 aa).

Topologically, residues 1-24 are extracellular; sequence MEGNQTWITDITLLGFQVGPALAI. N4 carries N-linked (GlcNAc...) asparagine glycosylation. The chain crosses the membrane as a helical span at residues 25-48; sequence LLCGLFSVFYTLTLLGNGVIFGII. Residues 49–56 lie on the Cytoplasmic side of the membrane; sequence CLDSKLHT. The helical transmembrane segment at 57–78 threads the bilayer; it reads PMYFFLSHLAIIDMSYASNNVP. Residues 79–99 lie on the Extracellular side of the membrane; sequence KMLANLMNQKRTISFVPCIMQ. The chain crosses the membrane as a helical span at residues 100-119; it reads TFLYLAFAVTECLILVVMSY. The Cytoplasmic portion of the chain corresponds to 120–138; it reads DRYVAICHPFQYTVIMSWR. The helical transmembrane segment at 139-157 threads the bilayer; sequence VCTILVLTSWSCGFALSLV. At 158–194 the chain is on the extracellular side; it reads HEILLLRLPFCGPRDVNHLFCEILSVLKLACADTWVN. Residues 195–218 traverse the membrane as a helical segment; it reads QVVIFATCVFVLVGPLSLILVSYM. The Cytoplasmic segment spans residues 219-235; that stretch reads HILGAILKIQTKEGRIK. A helical membrane pass occupies residues 236-258; sequence AFSTCSSHLCVVGLFFGIAMVVY. Residues 259 to 271 are Extracellular-facing; sequence MVPDSNQREEQEK. A helical membrane pass occupies residues 272–291; it reads MLSLFHSVFNPMLNPLIYSL. Residues 292-310 lie on the Cytoplasmic side of the membrane; the sequence is RNAQLKGALHRALQRKRSM.

Belongs to the G-protein coupled receptor 1 family.

The protein localises to the cell membrane. Odorant receptor. This is Olfactory receptor 2A2 (OR2A2) from Homo sapiens (Human).